We begin with the raw amino-acid sequence, 104 residues long: A-type ATP synthase subunit F (104 aa).

The protein belongs to the V-ATPase F subunit family. In terms of assembly, has multiple subunits with at least A(3), B(3), C, D, E, F, H, I and proteolipid K(x).

Its subcellular location is the cell membrane. In terms of biological role, component of the A-type ATP synthase that produces ATP from ADP in the presence of a proton gradient across the membrane. The protein is A-type ATP synthase subunit F of Thermoplasma volcanium (strain ATCC 51530 / DSM 4299 / JCM 9571 / NBRC 15438 / GSS1).